A 194-amino-acid chain; its full sequence is Large ribosomal subunit protein eL15 (194 aa).

The interval 165-194 (AGKKGRGLMNKGKGAEKVRPGIRANKKLGK) is disordered.

Belongs to the eukaryotic ribosomal protein eL15 family.

In Methanococcus aeolicus (strain ATCC BAA-1280 / DSM 17508 / OCM 812 / Nankai-3), this protein is Large ribosomal subunit protein eL15.